The chain runs to 548 residues: Chaperonin GroEL (548 aa).

ATP contacts are provided by residues 30-33 (TLGP), Lys51, 87-91 (DGTTT), Gly415, 479-481 (NAA), and Asp495.

It belongs to the chaperonin (HSP60) family. Forms a cylinder of 14 subunits composed of two heptameric rings stacked back-to-back. Interacts with the co-chaperonin GroES.

Its subcellular location is the cytoplasm. The enzyme catalyses ATP + H2O + a folded polypeptide = ADP + phosphate + an unfolded polypeptide.. Its function is as follows. Together with its co-chaperonin GroES, plays an essential role in assisting protein folding. The GroEL-GroES system forms a nano-cage that allows encapsulation of the non-native substrate proteins and provides a physical environment optimized to promote and accelerate protein folding. This is Chaperonin GroEL from Pseudomonas fluorescens (strain SBW25).